Consider the following 598-residue polypeptide: MAFPGVRRGLGELIGLRKSDAWYSTEDPRFGLTCRITASTRKLASCTSPWQYADIIQFIASTTITTIMLESLIEQWQIMRQAFAPMRLSRWQLVKLLAAQIHRDNPVAAKIAALLFVAGLFWAVSVLTRPKRLDKKLGLPLIGGSRTLKKDFATVIERGRQMYPDQPFIVNSSGKPFVVYPPSNFDEIKRLSEEEASAQDFFYDATHGYWTSVGTETPALWKTIGIDLARAGAPVVSTKQKDARTAFDRYVGYCPDEKSFNVFDVMMKVVALTNGASFVGREVAGGRWHELVAQLPMTVYFAVIFLTWTPRLFRPFLEPLFFLPHFKVQRDMRRILEPIIKQDLDEWSKTDDKKEQLKVKEGQRLPYHKWLISRYGPGEATPRQLATDQIVTAFESTISTALTIYYILFQLASRPELQDELRQEIADNTTDGQLPSTSLTELRKMDSVMRESFRVNPFALFSLYRITRKPLQLSTGPKLPAGTIFCVDVHHINNSSALFPAPTRYDPHRFLNKREQPGAEHRHQFVSTGPMDPNFGDGTQACPGRFWANNTIKVCLVHVLTRYRLKLKEGHTRPQPVCMPNGSWVPDLKAEVIFQSLD.

A helical membrane pass occupies residues 107–127 (VAAKIAALLFVAGLFWAVSVL). N-linked (GlcNAc...) asparagine glycosylation is found at Asn171, Asn428, and Asn494. Cys542 serves as a coordination point for heme. Asn549 and Asn581 each carry an N-linked (GlcNAc...) asparagine glycan.

It belongs to the cytochrome P450 family. Heme serves as cofactor.

The protein resides in the membrane. It functions in the pathway mycotoxin biosynthesis. Its function is as follows. Cytochrome P450 monooxygenase; part of the gene cluster that mediates the biosynthesis of the mycotoxins phomacins, leucine-derived cytochalasans with potent actin polymerization-inhibitory activities and monocot-specific antigerminative activities. The first step in the pathway is catalyzed by the hybrid PKS-NRPS phmA, assisted by the enoyl reductase phmE, that are responsible for fusion of the leucine precursor and the polyketide backbone to produce a 2-pyrrolidone intermediate. The polyketide synthase module (PKS) of phmA is responsible for the synthesis of the polyketide backbone and the downstream nonribosomal peptide synthetase (NRPS) amidates the carboxyl end of the polyketide with the leucine precursor. Because phmA lacks a designated enoylreductase (ER) domain, the required activity is provided the enoyl reductase phmE. Reduction by the hydrolyase phmG, followed by dehydration and intra-molecular Diels-Alder cyclization by the Diels-Alderase phmD then yield the required isoindolone-fused macrocycle. A number of oxidative steps catalyzed by the tailoring cytochrome P450 monooxygenase phmB, the FAD-linked oxidoreductase phmC and the short-chain dehydrogenase/reductase phmF, are further required to afford the final products, phomacin D and phomacin E. The chain is Cytochrome P450 monooxygenase phmB from Phaeosphaeria nodorum (strain SN15 / ATCC MYA-4574 / FGSC 10173) (Glume blotch fungus).